A 314-amino-acid polypeptide reads, in one-letter code: Small ribosomal subunit biogenesis GTPase RsgA (314 aa).

A CP-type G domain is found at 78 to 238 (SEIFREKLIA…IIDSPGFQEF (161 aa)). GTP is bound by residues 127 to 130 (NKID) and 180 to 188 (GQSGVGKST). Zn(2+) contacts are provided by C262, C267, H269, and C275.

Belongs to the TRAFAC class YlqF/YawG GTPase family. RsgA subfamily. In terms of assembly, monomer. Associates with 30S ribosomal subunit, binds 16S rRNA. Requires Zn(2+) as cofactor.

Its subcellular location is the cytoplasm. In terms of biological role, one of several proteins that assist in the late maturation steps of the functional core of the 30S ribosomal subunit. Helps release RbfA from mature subunits. May play a role in the assembly of ribosomal proteins into the subunit. Circularly permuted GTPase that catalyzes slow GTP hydrolysis, GTPase activity is stimulated by the 30S ribosomal subunit. The sequence is that of Small ribosomal subunit biogenesis GTPase RsgA from Nitrosomonas europaea (strain ATCC 19718 / CIP 103999 / KCTC 2705 / NBRC 14298).